Consider the following 300-residue polypeptide: UDP-N-acetylenolpyruvoylglucosamine reductase (300 aa).

Residues 28 to 193 form the FAD-binding PCMH-type domain; it reads KTGGPADVLA…LQATFALEKG (166 aa). The active site involves arginine 172. Catalysis depends on serine 222, which acts as the Proton donor. Glutamate 292 is a catalytic residue.

Belongs to the MurB family. It depends on FAD as a cofactor.

It localises to the cytoplasm. It carries out the reaction UDP-N-acetyl-alpha-D-muramate + NADP(+) = UDP-N-acetyl-3-O-(1-carboxyvinyl)-alpha-D-glucosamine + NADPH + H(+). It functions in the pathway cell wall biogenesis; peptidoglycan biosynthesis. Its function is as follows. Cell wall formation. The sequence is that of UDP-N-acetylenolpyruvoylglucosamine reductase from Enterococcus faecalis (strain ATCC 700802 / V583).